Here is a 404-residue protein sequence, read N- to C-terminus: Argininosuccinate synthase (404 aa).

Residue 9-17 (AYSGGLDTS) coordinates ATP. Tyr-86 is a binding site for L-citrulline. Position 116 (Gly-116) interacts with ATP. Residues Thr-118, Asn-122, and Asp-123 each coordinate L-aspartate. Asn-122 provides a ligand contact to L-citrulline. 5 residues coordinate L-citrulline: Arg-126, Ser-174, Ser-183, Glu-259, and Tyr-271.

Belongs to the argininosuccinate synthase family. Type 1 subfamily. As to quaternary structure, homotetramer.

The protein localises to the cytoplasm. It carries out the reaction L-citrulline + L-aspartate + ATP = 2-(N(omega)-L-arginino)succinate + AMP + diphosphate + H(+). It functions in the pathway amino-acid biosynthesis; L-arginine biosynthesis; L-arginine from L-ornithine and carbamoyl phosphate: step 2/3. The polypeptide is Argininosuccinate synthase (Listeria innocua serovar 6a (strain ATCC BAA-680 / CLIP 11262)).